The chain runs to 216 residues: Pyridoxine/pyridoxamine 5'-phosphate oxidase (216 aa).

FMN contacts are provided by residues 65–70 (RMVLLK), 80–81 (YT), R86, K87, and Q109. Position 70 (K70) interacts with substrate. Substrate is bound by residues Y127, R131, and S135. FMN is bound by residues 144-145 (QS) and W189. 195 to 197 (RLH) contacts substrate. An FMN-binding site is contributed by R199.

Belongs to the pyridoxamine 5'-phosphate oxidase family. As to quaternary structure, homodimer. It depends on FMN as a cofactor.

It catalyses the reaction pyridoxamine 5'-phosphate + O2 + H2O = pyridoxal 5'-phosphate + H2O2 + NH4(+). It carries out the reaction pyridoxine 5'-phosphate + O2 = pyridoxal 5'-phosphate + H2O2. The protein operates within cofactor metabolism; pyridoxal 5'-phosphate salvage; pyridoxal 5'-phosphate from pyridoxamine 5'-phosphate: step 1/1. It functions in the pathway cofactor metabolism; pyridoxal 5'-phosphate salvage; pyridoxal 5'-phosphate from pyridoxine 5'-phosphate: step 1/1. In terms of biological role, catalyzes the oxidation of either pyridoxine 5'-phosphate (PNP) or pyridoxamine 5'-phosphate (PMP) into pyridoxal 5'-phosphate (PLP). The chain is Pyridoxine/pyridoxamine 5'-phosphate oxidase from Sphingopyxis alaskensis (strain DSM 13593 / LMG 18877 / RB2256) (Sphingomonas alaskensis).